The primary structure comprises 390 residues: MNSLSEANTKFMFDLFQQFRKSKENNIFYSPISITSALGMVLLGAKDNTAQQISKVLHFDQVTENTTEKAATYHVDRSGNVHHQFQKLLTEFNKSTDAYELKIANKLFGEKTYQFLQEYLDAIKKFYQTSVESTDFANAPEESRKKINSWVESQTNEKIKNLFPDGTIGNDTTLVLVNAIYFKGQWENKFKKENTKEEKFWPNKNTYKSVQMMRQYNSFNFALLEDVQAKVLEIPYKGKDLSMIVLLPNEIDGLQKLEEKLTAEKLMEWTSLQNMRETCVDLHLPRFKMEESYDLKDTLRTMGMVNIFNGDADLSGMTWSHGLSVSKVLHKAFVEVTEEGVEAAAATAVVVVELSSPSTNEEFCCNHPFLFFIRQNKTNSILFYGRFSSP.

At M1 the chain carries N-acetylmethionine.

This sequence belongs to the serpin family. Ov-serpin subfamily. As to expression, squamous cells.

The protein localises to the cytoplasm. May act as a protease inhibitor to modulate the host immune response against tumor cells. The polypeptide is Serpin B4 (SERPINB4) (Homo sapiens (Human)).